Consider the following 372-residue polypeptide: Bifunctional coenzyme PQQ synthesis protein C/D (372 aa).

The tract at residues 1–267 (MTAQFPPPVP…VAETNSAEDS (267 aa)) is pqqC. Positions 260-288 (ETNSAEDSPAAAASPAATTAEPTAFSGSD) are disordered. Low complexity predominate over residues 264–283 (AEDSPAAAASPAATTAEPTA). Residues 268–280 (PAAAASPAATTAE) are linker. Residues 281-372 (PTAFSGSDVP…GLAQKRVLER (92 aa)) form a pqqD region.

This sequence in the N-terminal section; belongs to the PqqC family. It in the C-terminal section; belongs to the PqqD family. Monomer. Interacts with PqqE.

It carries out the reaction 6-(2-amino-2-carboxyethyl)-7,8-dioxo-1,2,3,4,7,8-hexahydroquinoline-2,4-dicarboxylate + 3 O2 = pyrroloquinoline quinone + 2 H2O2 + 2 H2O + H(+). The protein operates within cofactor biosynthesis; pyrroloquinoline quinone biosynthesis. Its function is as follows. The PqqC region is involved in ring cyclization and eight-electron oxidation of 3a-(2-amino-2-carboxyethyl)-4,5-dioxo-4,5,6,7,8,9-hexahydroquinoline-7,9-dicarboxylic-acid to PQQ. Functionally, the PqqD region functions as a PqqA binding domain and presents PqqA to PqqE. The protein is Bifunctional coenzyme PQQ synthesis protein C/D (pqqCD) of Methylorubrum extorquens (strain ATCC 14718 / DSM 1338 / JCM 2805 / NCIMB 9133 / AM1) (Methylobacterium extorquens).